A 147-amino-acid chain; its full sequence is Hemoglobin subunit beta (147 aa).

Val-2 is modified (N-acetylvaline). A Globin domain is found at 3–147; it reads HLTGEEKAAV…VANALAHKYH (145 aa). Thr-13 is subject to Phosphothreonine. The residue at position 45 (Ser-45) is a Phosphoserine. An N6-acetyllysine modification is found at Lys-60. Heme b is bound at residue His-64. N6-acetyllysine is present on Lys-83. Heme b is bound at residue His-93. Cys-94 is modified (S-nitrosocysteine). An N6-acetyllysine modification is found at Lys-145.

Belongs to the globin family. Heterotetramer of two alpha chains and two beta chains. In terms of tissue distribution, red blood cells.

In terms of biological role, involved in oxygen transport from the lung to the various peripheral tissues. This Aotus azarae (Azara's night monkey) protein is Hemoglobin subunit beta (HBB).